A 110-amino-acid chain; its full sequence is MNSRHKGTQAEDFACVFLRECGFEILERNFFARYGEIDIIALKDNVVHFIEVKSGESFEPIYNITPSKIKKLTKAIGFYLFTHKITQAYCLDALIIKNGECELIENITLC.

This sequence belongs to the UPF0102 family.

The chain is UPF0102 protein HH_1751 from Helicobacter hepaticus (strain ATCC 51449 / 3B1).